The sequence spans 782 residues: E3 ubiquitin-protein ligase SopA (782 aa).

A disordered region spans residues 137–171; that stretch reads VSVSANNRPTVSEGRTPPVSPSLSLQATSSPSSPA. Residues 157-171 show a composition bias toward low complexity; the sequence is PSLSLQATSSPSSPA. The active-site Glycyl thioester intermediate is the Cys-753.

This sequence belongs to the SopA E3 ligase family. Post-translationally, ubiquitinated in the presence of host E1 ubiquitin-activating enzyme, E2 ubiquitin-conjugating enzyme and ubiquitin.

It is found in the secreted. The protein resides in the host cell. It catalyses the reaction S-ubiquitinyl-[E2 ubiquitin-conjugating enzyme]-L-cysteine + [acceptor protein]-L-lysine = [E2 ubiquitin-conjugating enzyme]-L-cysteine + N(6)-ubiquitinyl-[acceptor protein]-L-lysine.. Its function is as follows. Effector proteins function to alter host cell physiology and promote bacterial survival in host tissues. This protein is an E3 ubiquitin ligase that interferes with host's ubiquitination pathway. This Salmonella dublin (strain CT_02021853) protein is E3 ubiquitin-protein ligase SopA (sopA).